The primary structure comprises 78 residues: Acyl carrier protein (78 aa).

The 76-residue stretch at 2–77 (SDIEARVKKI…NAIDYANTHQ (76 aa)) folds into the Carrier domain. An O-(pantetheine 4'-phosphoryl)serine modification is found at Ser-37.

It belongs to the acyl carrier protein (ACP) family. 4'-phosphopantetheine is transferred from CoA to a specific serine of apo-ACP by AcpS. This modification is essential for activity because fatty acids are bound in thioester linkage to the sulfhydryl of the prosthetic group.

The protein resides in the cytoplasm. It participates in lipid metabolism; fatty acid biosynthesis. Functionally, carrier of the growing fatty acid chain in fatty acid biosynthesis. The sequence is that of Acyl carrier protein from Comamonas testosteroni (Pseudomonas testosteroni).